The following is a 279-amino-acid chain: Four and a half LIM domains protein 2 (279 aa).

The C4-type zinc finger occupies 7–31; sequence CHHCEDSLFGRKYVLREEQPYCVAC. LIM zinc-binding domains are found at residues 40–92, 101–153, and 162–212; these read CEEC…CTDC, CQEC…CVPC, and CVQC…CLGC. A Glycyl lysine isopeptide (Lys-Gly) (interchain with G-Cter in SUMO2) cross-link involves residue lysine 78. Glycyl lysine isopeptide (Lys-Gly) (interchain with G-Cter in SUMO2) cross-links involve residues lysine 167 and lysine 220. An LIM zinc-binding 4 domain is found at 221 to 275; sequence CAGCANPISGLGGTKYISFEERQWHNDCFNCKKCSLSLVGRGFLTERDDILCPDC. Serine 238 carries the phosphoserine modification.

In terms of assembly, interacts with ZNF638 and TTN/titin. Interacts with E4F1. Interacts with GRB7. Interacts with SIRT1 and FOXO1. Interacts with CEFIP and calcineurin. Interacts with FOXK1.

The protein resides in the cytoplasm. It localises to the nucleus. Its subcellular location is the myofibril. It is found in the sarcomere. The protein localises to the z line. Its function is as follows. May function as a molecular transmitter linking various signaling pathways to transcriptional regulation. Negatively regulates the transcriptional repressor E4F1 and may function in cell growth. Inhibits the transcriptional activity of FOXO1 and its apoptotic function by enhancing the interaction of FOXO1 with SIRT1 and FOXO1 deacetylation. Negatively regulates the calcineurin/NFAT signaling pathway in cardiomyocytes. This chain is Four and a half LIM domains protein 2 (FHL2), found in Bos taurus (Bovine).